Consider the following 484-residue polypeptide: tRNA sulfurtransferase (484 aa).

A THUMP domain is found at 63–167 (QAFGERLACI…GDKLYMVTKR (105 aa)). Residues 185–186 (LI), K267, G289, and Q298 each bind ATP. A disulfide bond links C346 and C458. In terms of domain architecture, Rhodanese spans 406–484 (IDTNEVVIDI…GYHNVKVYRP (79 aa)). C458 functions as the Cysteine persulfide intermediate in the catalytic mechanism.

Belongs to the ThiI family.

It localises to the cytoplasm. The enzyme catalyses [ThiI sulfur-carrier protein]-S-sulfanyl-L-cysteine + a uridine in tRNA + 2 reduced [2Fe-2S]-[ferredoxin] + ATP + H(+) = [ThiI sulfur-carrier protein]-L-cysteine + a 4-thiouridine in tRNA + 2 oxidized [2Fe-2S]-[ferredoxin] + AMP + diphosphate. It carries out the reaction [ThiS sulfur-carrier protein]-C-terminal Gly-Gly-AMP + S-sulfanyl-L-cysteinyl-[cysteine desulfurase] + AH2 = [ThiS sulfur-carrier protein]-C-terminal-Gly-aminoethanethioate + L-cysteinyl-[cysteine desulfurase] + A + AMP + 2 H(+). Its pathway is cofactor biosynthesis; thiamine diphosphate biosynthesis. Catalyzes the ATP-dependent transfer of a sulfur to tRNA to produce 4-thiouridine in position 8 of tRNAs, which functions as a near-UV photosensor. Also catalyzes the transfer of sulfur to the sulfur carrier protein ThiS, forming ThiS-thiocarboxylate. This is a step in the synthesis of thiazole, in the thiamine biosynthesis pathway. The sulfur is donated as persulfide by IscS. The polypeptide is tRNA sulfurtransferase (Shewanella sp. (strain ANA-3)).